We begin with the raw amino-acid sequence, 466 residues long: Methylenetetrahydrofolate--tRNA-(uracil-5-)-methyltransferase TrmFO (466 aa).

Residue 10 to 15 (GGGLAG) coordinates FAD.

It belongs to the MnmG family. TrmFO subfamily. FAD is required as a cofactor.

The protein localises to the cytoplasm. It carries out the reaction uridine(54) in tRNA + (6R)-5,10-methylene-5,6,7,8-tetrahydrofolate + NADH + H(+) = 5-methyluridine(54) in tRNA + (6S)-5,6,7,8-tetrahydrofolate + NAD(+). The enzyme catalyses uridine(54) in tRNA + (6R)-5,10-methylene-5,6,7,8-tetrahydrofolate + NADPH + H(+) = 5-methyluridine(54) in tRNA + (6S)-5,6,7,8-tetrahydrofolate + NADP(+). Its function is as follows. Catalyzes the folate-dependent formation of 5-methyl-uridine at position 54 (M-5-U54) in all tRNAs. This Phenylobacterium zucineum (strain HLK1) protein is Methylenetetrahydrofolate--tRNA-(uracil-5-)-methyltransferase TrmFO.